Consider the following 217-residue polypeptide: MKRQSALIVFSGGQDSTTCLFWALKHYEIVELVTFAYGQRHSLEIEVAKEIAQEQGLKHHVLDMSLLGQITENALTSDIDIEAEEGEVPNTFVDGRNHLFLSFAAVLAKQRGIIDIVTGVCETDFSGYPDCRDVFVKSLNVTLNLAMAYDFVIQTPLMWLDKAETWALADQLGAFDYVREKTLTCYNGIIGTGCGDCPACHLRQKGLEKYLAEKGDA.

Position 10 to 20 (10 to 20) interacts with ATP; that stretch reads FSGGQDSTTCL. Zn(2+) contacts are provided by Cys185, Cys194, Cys197, and Cys200.

The protein belongs to the QueC family. As to quaternary structure, homodimer. The cofactor is Zn(2+).

It carries out the reaction 7-carboxy-7-deazaguanine + NH4(+) + ATP = 7-cyano-7-deazaguanine + ADP + phosphate + H2O + H(+). Its pathway is purine metabolism; 7-cyano-7-deazaguanine biosynthesis. Functionally, catalyzes the ATP-dependent conversion of 7-carboxy-7-deazaguanine (CDG) to 7-cyano-7-deazaguanine (preQ(0)). This chain is 7-cyano-7-deazaguanine synthase, found in Streptococcus thermophilus (strain ATCC BAA-491 / LMD-9).